The chain runs to 330 residues: DNA-directed RNA polymerase subunit alpha (330 aa).

The alpha N-terminal domain (alpha-NTD) stretch occupies residues 1–235 (MVREKVKVST…DLFIHFLHAK (235 aa)). The segment at 270-330 (IALKYIFIDQ…KQILGILEKK (61 aa)) is alpha C-terminal domain (alpha-CTD).

It belongs to the RNA polymerase alpha chain family. In terms of assembly, in plastids the minimal PEP RNA polymerase catalytic core is composed of four subunits: alpha, beta, beta', and beta''. When a (nuclear-encoded) sigma factor is associated with the core the holoenzyme is formed, which can initiate transcription.

Its subcellular location is the plastid. It is found in the chloroplast. The enzyme catalyses RNA(n) + a ribonucleoside 5'-triphosphate = RNA(n+1) + diphosphate. Functionally, DNA-dependent RNA polymerase catalyzes the transcription of DNA into RNA using the four ribonucleoside triphosphates as substrates. The protein is DNA-directed RNA polymerase subunit alpha (rpoA) of Gossypium barbadense (Sea Island cotton).